The chain runs to 160 residues: Large ribosomal subunit protein eL21A (160 aa).

A disordered region spans residues 114-138 (AKRKEAKAQGKTVQLRRQPAPPAKA).

The protein belongs to the eukaryotic ribosomal protein eL21 family. As to quaternary structure, component of the large ribosomal subunit (LSU). Mature yeast ribosomes consist of a small (40S) and a large (60S) subunit. The 40S small subunit contains 1 molecule of ribosomal RNA (18S rRNA) and at least 33 different proteins. The large 60S subunit contains 3 rRNA molecules (25S, 5.8S and 5S rRNA) and at least 46 different proteins.

It is found in the cytoplasm. Its function is as follows. Component of the ribosome, a large ribonucleoprotein complex responsible for the synthesis of proteins in the cell. The small ribosomal subunit (SSU) binds messenger RNAs (mRNAs) and translates the encoded message by selecting cognate aminoacyl-transfer RNA (tRNA) molecules. The large subunit (LSU) contains the ribosomal catalytic site termed the peptidyl transferase center (PTC), which catalyzes the formation of peptide bonds, thereby polymerizing the amino acids delivered by tRNAs into a polypeptide chain. The nascent polypeptides leave the ribosome through a tunnel in the LSU and interact with protein factors that function in enzymatic processing, targeting, and the membrane insertion of nascent chains at the exit of the ribosomal tunnel. This is Large ribosomal subunit protein eL21A (rpl2101) from Schizosaccharomyces pombe (strain 972 / ATCC 24843) (Fission yeast).